A 185-amino-acid polypeptide reads, in one-letter code: Ribosome-recycling factor (185 aa).

It belongs to the RRF family.

The protein localises to the cytoplasm. Functionally, responsible for the release of ribosomes from messenger RNA at the termination of protein biosynthesis. May increase the efficiency of translation by recycling ribosomes from one round of translation to another. This is Ribosome-recycling factor from Alteromonas mediterranea (strain DSM 17117 / CIP 110805 / LMG 28347 / Deep ecotype).